Reading from the N-terminus, the 361-residue chain is Eukaryotic translation initiation factor 3 subunit F (361 aa).

2 stretches are compositionally biased toward low complexity: residues M1–P11 and A21–V42. The disordered stretch occupies residues M1–V42. At A2 the chain carries N-acetylalanine. S50 is subject to Phosphoserine; by CDK11; in vitro. A compositionally biased stretch (low complexity) spans A55–A78. The tract at residues A55–L86 is disordered. One can recognise an MPN domain in the interval V96–G226. The residue at position 242 (K242) is an N6-acetyllysine. S262 carries the post-translational modification Phosphoserine.

It belongs to the eIF-3 subunit F family. As to quaternary structure, component of the eukaryotic translation initiation factor 3 (eIF-3) complex, which is composed of 13 subunits: EIF3A, EIF3B, EIF3C, EIF3D, EIF3E, EIF3F, EIF3G, EIF3H, EIF3I, EIF3J, EIF3K, EIF3L and EIF3M. The eIF-3 complex appears to include 3 stable modules: module A is composed of EIF3A, EIF3B, EIF3G and EIF3I; module B is composed of EIF3F, EIF3H, and EIF3M; and module C is composed of EIF3C, EIF3D, EIF3E, EIF3K and EIF3L. EIF3C of module C binds EIF3B of module A and EIF3H of module B, thereby linking the three modules. EIF3J is a labile subunit that binds to the eIF-3 complex via EIF3B. The eIF-3 complex interacts with RPS6KB1 under conditions of nutrient depletion. Mitogenic stimulation leads to binding and activation of a complex composed of MTOR and RPTOR, leading to phosphorylation and release of RPS6KB1 and binding of EIF4B to eIF-3. Interacts with RNF139; the interaction leads to protein translation inhibitions in a ubiquitination-dependent manner. Interacts with DTX1, the interaction is required for deubiquitinating activity towards NOTCH1. Post-translationally, phosphorylation is enhanced upon serum stimulation. Phosphorylated during apoptosis by caspase-processed CDK11.

The protein resides in the cytoplasm. The enzyme catalyses Thiol-dependent hydrolysis of ester, thioester, amide, peptide and isopeptide bonds formed by the C-terminal Gly of ubiquitin (a 76-residue protein attached to proteins as an intracellular targeting signal).. Functionally, component of the eukaryotic translation initiation factor 3 (eIF-3) complex, which is required for several steps in the initiation of protein synthesis. The eIF-3 complex associates with the 40S ribosome and facilitates the recruitment of eIF-1, eIF-1A, eIF-2:GTP:methionyl-tRNAi and eIF-5 to form the 43S pre-initiation complex (43S PIC). The eIF-3 complex stimulates mRNA recruitment to the 43S PIC and scanning of the mRNA for AUG recognition. The eIF-3 complex is also required for disassembly and recycling of post-termination ribosomal complexes and subsequently prevents premature joining of the 40S and 60S ribosomal subunits prior to initiation. The eIF-3 complex specifically targets and initiates translation of a subset of mRNAs involved in cell proliferation, including cell cycling, differentiation and apoptosis, and uses different modes of RNA stem-loop binding to exert either translational activation or repression. In terms of biological role, deubiquitinates activated NOTCH1, promoting its nuclear import, thereby acting as a positive regulator of Notch signaling. The protein is Eukaryotic translation initiation factor 3 subunit F of Macaca fascicularis (Crab-eating macaque).